The chain runs to 222 residues: Protein-L-isoaspartate O-methyltransferase (222 aa).

Ser-69 is a catalytic residue.

This sequence belongs to the methyltransferase superfamily. L-isoaspartyl/D-aspartyl protein methyltransferase family.

The protein resides in the cytoplasm. It carries out the reaction [protein]-L-isoaspartate + S-adenosyl-L-methionine = [protein]-L-isoaspartate alpha-methyl ester + S-adenosyl-L-homocysteine. Functionally, catalyzes the methyl esterification of L-isoaspartyl residues in peptides and proteins that result from spontaneous decomposition of normal L-aspartyl and L-asparaginyl residues. It plays a role in the repair and/or degradation of damaged proteins. In Nitrosomonas europaea (strain ATCC 19718 / CIP 103999 / KCTC 2705 / NBRC 14298), this protein is Protein-L-isoaspartate O-methyltransferase.